Consider the following 387-residue polypeptide: Erythronate-4-phosphate dehydrogenase (387 aa).

The substrate site is built by Ser45 and Thr67. Asp147 serves as a coordination point for NAD(+). The active site involves Arg208. Position 232 (Asp232) interacts with NAD(+). The active site involves Glu237. Catalysis depends on His254, which acts as the Proton donor. Residue Gly257 coordinates NAD(+). Substrate is bound at residue Tyr258.

The protein belongs to the D-isomer specific 2-hydroxyacid dehydrogenase family. PdxB subfamily. Homodimer.

It localises to the cytoplasm. It carries out the reaction 4-phospho-D-erythronate + NAD(+) = (R)-3-hydroxy-2-oxo-4-phosphooxybutanoate + NADH + H(+). Its pathway is cofactor biosynthesis; pyridoxine 5'-phosphate biosynthesis; pyridoxine 5'-phosphate from D-erythrose 4-phosphate: step 2/5. Catalyzes the oxidation of erythronate-4-phosphate to 3-hydroxy-2-oxo-4-phosphonooxybutanoate. This chain is Erythronate-4-phosphate dehydrogenase, found in Shewanella woodyi (strain ATCC 51908 / MS32).